We begin with the raw amino-acid sequence, 130 residues long: MSATQNYGTGRRKTATARVFLRPGTGNISINNRSLDTFFGRETARMVVRQPLELTETTEKFDIYVTVIGGGVSGQAGAIRHGITRALIEYDETLRSPLRKAGYVTRDAREVERKKVGLRKARKRPQYSKR.

Belongs to the universal ribosomal protein uS9 family.

This chain is Small ribosomal subunit protein uS9, found in Ectopseudomonas mendocina (strain ymp) (Pseudomonas mendocina).